Reading from the N-terminus, the 352-residue chain is Photosystem II D2 protein (352 aa).

Thr-2 carries the post-translational modification N-acetylthreonine. Residue Thr-2 is modified to Phosphothreonine. A helical membrane pass occupies residues 40–60 (CAYFALGGWLTGTTFVTSWYT). His-117 contacts chlorophyll a. Residues 124 to 140 (GFMLRQFEIARAVKIRP) traverse the membrane as a helical segment. Residues Gln-129 and Asn-142 each coordinate pheophytin a. The chain crosses the membrane as a helical span at residues 152-165 (VFVSVFLIYPLGQA). His-197 contacts chlorophyll a. The helical transmembrane segment at 207-227 (AALLCAIHGATVENTLFEDGD) threads the bilayer. Positions 214 and 261 each coordinate a plastoquinone. His-214 is a binding site for Fe cation. His-268 is a binding site for Fe cation. The chain crosses the membrane as a helical span at residues 278–294 (GLWMSALGVVGLALNLR).

It belongs to the reaction center PufL/M/PsbA/D family. PSII is composed of 1 copy each of membrane proteins PsbA, PsbB, PsbC, PsbD, PsbE, PsbF, PsbH, PsbI, PsbJ, PsbK, PsbL, PsbM, PsbT, PsbX, PsbY, PsbZ, Psb30/Ycf12, at least 3 peripheral proteins of the oxygen-evolving complex and a large number of cofactors. It forms dimeric complexes. Requires The D1/D2 heterodimer binds P680, chlorophylls that are the primary electron donor of PSII, and subsequent electron acceptors. It shares a non-heme iron and each subunit binds pheophytin, quinone, additional chlorophylls, carotenoids and lipids. There is also a Cl(-1) ion associated with D1 and D2, which is required for oxygen evolution. The PSII complex binds additional chlorophylls, carotenoids and specific lipids. as cofactor.

It localises to the plastid. Its subcellular location is the chloroplast thylakoid membrane. It catalyses the reaction 2 a plastoquinone + 4 hnu + 2 H2O = 2 a plastoquinol + O2. In terms of biological role, photosystem II (PSII) is a light-driven water:plastoquinone oxidoreductase that uses light energy to abstract electrons from H(2)O, generating O(2) and a proton gradient subsequently used for ATP formation. It consists of a core antenna complex that captures photons, and an electron transfer chain that converts photonic excitation into a charge separation. The D1/D2 (PsbA/PsbD) reaction center heterodimer binds P680, the primary electron donor of PSII as well as several subsequent electron acceptors. D2 is needed for assembly of a stable PSII complex. The protein is Photosystem II D2 protein of Tupiella akineta (Green alga).